A 620-amino-acid polypeptide reads, in one-letter code: MKVKVERTTITKKTTTTKPKPDEEDNNDDNSSSNGVEVTATATATRETSDQLDFLPADLSATISTTTTPTATRATTTRNLILHPFDGMQSAPTLTTPTLTPTTLRSIDEAFYELTGETNNSVNAPFQAGFKPPPLALLPNSGPVVGIGSAVEAIVPAGNTLEIGHQPNLDVLSKLNYSNSIVGSDTDDSNASWNDQHRINGDTTDTSSGATDSTSYQNNSMLGNGSNGSGANNFTGALAANQSTGGRGANNNSNTNTSNSATPAARRGGGRRPNKAFNMTPEEEEKRRIRRERNKAAAARCRKRRVDQTNDLTEEVDALVKKGDTLKAEITTLTELRNQLKYVIEAHLPTCPKVRDDILSVSTCNGLIGPAALHSTGGSSCGSVHSNHSHNNNNNNNNSNDSSSGTITGFDATLNSTGRSHSPLDLKPVHIDENLLLAIKHEPLDNGLDSESSSLDQDGPPPAKRAVPLPTIAQLTASLTTPTNPNGGSLNTPIVSQAPVSFAAFAANANNPNSPTLNLLNKGPKARPNTLAVQRPFAAPMQLNASGTGGVVDGKGAPIQIQGVPIQTPSTGVFNFDSLMDGGTGLTPVSGPLIPNCSSQNKHPLELPTPTTEPSKLCPL.

2 disordered regions span residues 1–36 (MKVK…SNGV) and 184–288 (SDTD…EKRR). Positions 184–194 (SDTDDSNASWN) are enriched in polar residues. 2 stretches are compositionally biased toward low complexity: residues 201–233 (GDTT…GANN) and 249–266 (ANNN…PAAR). The 64-residue stretch at 284 to 347 (EEKRRIRRER…NQLKYVIEAH (64 aa)) folds into the bZIP domain. The basic motif stretch occupies residues 286–305 (KRRIRRERNKAAAARCRKRR). The leucine-zipper stretch occupies residues 312 to 340 (LTEEVDALVKKGDTLKAEITTLTELRNQL). A disordered region spans residues 375–414 (STGGSSCGSVHSNHSHNNNNNNNNSNDSSSGTITGFDATL). Low complexity predominate over residues 377 to 405 (GGSSCGSVHSNHSHNNNNNNNNSNDSSSG). Ser422 carries the phosphoserine modification. Disordered regions lie at residues 447-466 (GLDS…AKRA) and 590-620 (SGPL…LCPL).

It belongs to the bZIP family. Fos subfamily. As to quaternary structure, homodimer. Heterodimer with Jra. The kay-Jra heterodimer binds more stably to the AP-1 site than either of the two proteins alone.

It localises to the nucleus. Developmentally regulated transcription factor AP-1 binds and recognizes the enhancer DNA sequence: 5'-TGA[CG]TCA-3'. May play a role in the function or determination of a particular subset of cells in the developing embryo. It is able to carry out its function either independently of or in conjunction with Jra. The polypeptide is Transcription factor kayak (Drosophila willistoni (Fruit fly)).